Here is a 227-residue protein sequence, read N- to C-terminus: ATP-dependent dethiobiotin synthetase BioD (227 aa).

Asn13–Val18 provides a ligand contact to ATP. A Mg(2+)-binding site is contributed by Thr17. Lys38 is a catalytic residue. Residues Asp55 and Glu116–Gly119 contribute to the ATP site. Positions 55 and 116 each coordinate Mg(2+).

It belongs to the dethiobiotin synthetase family. As to quaternary structure, homodimer. Mg(2+) serves as cofactor.

It is found in the cytoplasm. The enzyme catalyses (7R,8S)-7,8-diammoniononanoate + CO2 + ATP = (4R,5S)-dethiobiotin + ADP + phosphate + 3 H(+). The protein operates within cofactor biosynthesis; biotin biosynthesis; biotin from 7,8-diaminononanoate: step 1/2. Catalyzes a mechanistically unusual reaction, the ATP-dependent insertion of CO2 between the N7 and N8 nitrogen atoms of 7,8-diaminopelargonic acid (DAPA, also called 7,8-diammoniononanoate) to form a ureido ring. The polypeptide is ATP-dependent dethiobiotin synthetase BioD (Buchnera aphidicola subsp. Baizongia pistaciae (strain Bp)).